We begin with the raw amino-acid sequence, 85 residues long: MLSQNGTADPRYISYPGCIDCGPTFHLETDTATTRNGTSSFGDRIRSFCERARSLISNFVTWRSRNESCEVLAEIPQEKEVESTL.

This is an uncharacterized protein from Gallid herpesvirus 2 (strain Chicken/Md5/ATCC VR-987) (GaHV-2).